The primary structure comprises 322 residues: Peroxidase 66 (322 aa).

The N-terminal stretch at 1 to 24 (MAFSKGLIFAMIFAVLAIVKPSEA) is a signal peptide. Cystine bridges form between Cys35-Cys114 and Cys68-Cys73. Residue His66 is the Proton acceptor of the active site. Positions 67, 72, 74, and 76 each coordinate Ca(2+). The N-linked (GlcNAc...) asparagine glycan is linked to Asn155. A substrate-binding site is contributed by Pro161. N-linked (GlcNAc...) asparagine glycosylation is present at Asn166. His191 serves as a coordination point for heme b. Thr192 contacts Ca(2+). A disulfide bridge links Cys198 with Cys230. Asn207 carries an N-linked (GlcNAc...) asparagine glycan. Residues Asp245, Thr247, and Asp252 each coordinate Ca(2+).

It belongs to the peroxidase family. Classical plant (class III) peroxidase subfamily. It depends on heme b as a cofactor. Ca(2+) is required as a cofactor.

The protein resides in the secreted. It carries out the reaction 2 a phenolic donor + H2O2 = 2 a phenolic radical donor + 2 H2O. Removal of H(2)O(2), oxidation of toxic reductants, biosynthesis and degradation of lignin, suberization, auxin catabolism, response to environmental stresses such as wounding, pathogen attack and oxidative stress. These functions might be dependent on each isozyme/isoform in each plant tissue. The protein is Peroxidase 66 (PER66) of Arabidopsis thaliana (Mouse-ear cress).